We begin with the raw amino-acid sequence, 586 residues long: Probable zinc metalloprotease EGY3, chloroplastic (586 aa).

The transit peptide at 1–54 (MSSSSLVTSLLFSSSSSSNTATSTSSRRSFSLFSKNQYCKPSPLRRSSSLLLVR) directs the protein to the chloroplast. Basic and acidic residues predominate over residues 62 to 73 (EEKAAPAAESHH). The disordered stretch occupies residues 62–118 (EEKAAPAAESHHAGGGQDDAATASHHAVEGENGVADADGGGVKKSKEELEEEEQQEV). A coiled-coil region spans residues 103 to 195 (VKKSKEELEE…NTFKALDLNK (93 aa)). A run of 7 helical transmembrane segments spans residues 287 to 307 (LSAVALAVTTFGTIAIMSGFF), 318 to 338 (VSDVLPLFAGFLSILGVSEIA), 389 to 409 (ASAYLTSVALAVSAFVSDGSL), 427 to 447 (PLLSFVQAVIGPYADELGNVL), 454 to 474 (VGVPVDPLAFAGLLGIVVTSL), 506 to 526 (VALGAGAIIGGSVLCLAWGLF), and 550 to 570 (YAWGLVLAVVCLLTLFPNGGG).

It belongs to the peptidase M50B family.

The protein localises to the plastid. It is found in the chloroplast membrane. Its function is as follows. Probable membrane-associated metalloprotease that may be involved in chloroplast development. The polypeptide is Probable zinc metalloprotease EGY3, chloroplastic (EGY3) (Oryza sativa subsp. indica (Rice)).